Reading from the N-terminus, the 409-residue chain is Serine/threonine transporter SstT (409 aa).

The next 9 helical transmembrane spans lie at Leu-17–Ala-37, Phe-49–Ile-69, Ile-83–Phe-103, Ala-142–Phe-162, Val-180–Ala-200, Leu-218–Phe-238, Gly-301–Val-321, Val-331–Ile-351, and Leu-357–Ile-377.

The protein belongs to the dicarboxylate/amino acid:cation symporter (DAACS) (TC 2.A.23) family.

The protein resides in the cell inner membrane. The enzyme catalyses L-serine(in) + Na(+)(in) = L-serine(out) + Na(+)(out). It carries out the reaction L-threonine(in) + Na(+)(in) = L-threonine(out) + Na(+)(out). Functionally, involved in the import of serine and threonine into the cell, with the concomitant import of sodium (symport system). The polypeptide is Serine/threonine transporter SstT (Pseudomonas aeruginosa (strain UCBPP-PA14)).